Reading from the N-terminus, the 323-residue chain is MKPEVLLYKSLPDDLRARLDEHFTVTAINGLSPETIAEHGGAGARRRHDRLQQHGGSSAAGENAKLRAASTISVGYDNFDVEALNQRGIVLIDTPTVLTETVADTMMALVLSSARRVVEVAERVKAGEWRRSIGPDWFGIDVHHKKMGILGMGRIGLALAQRAHHGFGMPILYNARKHHEEAESRFNAQYCDLDTLLRESDFLCISLPLTEQTHHMIGREQLAKMKPSAILINAGRGPVVDEQALIAALKDKTIHAAGLDVFEQEPLPVDSELLTLPNVVALPHIGSATHETRYGMARDAVDNLIAALAGKVEKNCVNPQVLR.

Residues 37-62 (AEHGGAGARRRHDRLQQHGGSSAAGE) are disordered. Active-site residues include Arg-236 and Glu-265. His-284 functions as the Proton donor in the catalytic mechanism.

It belongs to the D-isomer specific 2-hydroxyacid dehydrogenase family. GhrB subfamily. As to quaternary structure, homodimer.

The protein localises to the cytoplasm. The enzyme catalyses glycolate + NADP(+) = glyoxylate + NADPH + H(+). It catalyses the reaction (R)-glycerate + NAD(+) = 3-hydroxypyruvate + NADH + H(+). The catalysed reaction is (R)-glycerate + NADP(+) = 3-hydroxypyruvate + NADPH + H(+). Its function is as follows. Catalyzes the NADPH-dependent reduction of glyoxylate and hydroxypyruvate into glycolate and glycerate, respectively. This is Glyoxylate/hydroxypyruvate reductase B (tkrA) from Enterobacter agglomerans (Erwinia herbicola).